The following is a 473-amino-acid chain: Photosystem II CP43 reaction center protein (473 aa).

The propeptide occupies 1-14 (MKILYSLRRFYHVE). The residue at position 15 (T15) is an N-acetylthreonine. Position 15 is a phosphothreonine (T15). Transmembrane regions (helical) follow at residues 69 to 93 (LFEV…PHLA), 134 to 155 (LLGP…KDRN), 178 to 200 (KALY…RKIT), 255 to 275 (KPFA…LSYS), and 291 to 312 (WFNN…ASQA). E367 provides a ligand contact to [CaMn4O5] cluster. A helical membrane pass occupies residues 447–471 (RARAAAAGFEKGIDRDLEPVLYMTP).

It belongs to the PsbB/PsbC family. PsbC subfamily. In terms of assembly, PSII is composed of 1 copy each of membrane proteins PsbA, PsbB, PsbC, PsbD, PsbE, PsbF, PsbH, PsbI, PsbJ, PsbK, PsbL, PsbM, PsbT, PsbX, PsbY, PsbZ, Psb30/Ycf12, at least 3 peripheral proteins of the oxygen-evolving complex and a large number of cofactors. It forms dimeric complexes. The cofactor is Binds multiple chlorophylls and provides some of the ligands for the Ca-4Mn-5O cluster of the oxygen-evolving complex. It may also provide a ligand for a Cl- that is required for oxygen evolution. PSII binds additional chlorophylls, carotenoids and specific lipids..

It localises to the plastid. It is found in the chloroplast thylakoid membrane. In terms of biological role, one of the components of the core complex of photosystem II (PSII). It binds chlorophyll and helps catalyze the primary light-induced photochemical processes of PSII. PSII is a light-driven water:plastoquinone oxidoreductase, using light energy to abstract electrons from H(2)O, generating O(2) and a proton gradient subsequently used for ATP formation. This is Photosystem II CP43 reaction center protein from Sorghum bicolor (Sorghum).